The sequence spans 346 residues: Protein RecA (346 aa).

ATP is bound at residue 65-72 (GPESSGKT).

This sequence belongs to the RecA family.

Its subcellular location is the cytoplasm. Its function is as follows. Can catalyze the hydrolysis of ATP in the presence of single-stranded DNA, the ATP-dependent uptake of single-stranded DNA by duplex DNA, and the ATP-dependent hybridization of homologous single-stranded DNAs. It interacts with LexA causing its activation and leading to its autocatalytic cleavage. The polypeptide is Protein RecA (Enterococcus hirae (strain ATCC 9790 / DSM 20160 / JCM 8729 / LMG 6399 / NBRC 3181 / NCIMB 6459 / NCDO 1258 / NCTC 12367 / WDCM 00089 / R)).